A 335-amino-acid chain; its full sequence is Transcriptional adapter 1 (335 aa).

Belongs to the TADA1 family. Component of the STAGA transcription coactivator-HAT complex, at least composed of SUPT3H, GCN5L2, TAF5L, TAF6L, SUPT7L, TADA3L, TAD1L, TAF10, TAF12, TRRAP and TAF9.

It is found in the nucleus. Its function is as follows. Probably involved in transcriptional regulation. In Bos taurus (Bovine), this protein is Transcriptional adapter 1 (TADA1).